We begin with the raw amino-acid sequence, 235 residues long: Aspartate/glutamate leucyltransferase (235 aa).

It belongs to the R-transferase family. Bpt subfamily.

The protein resides in the cytoplasm. It carries out the reaction N-terminal L-glutamyl-[protein] + L-leucyl-tRNA(Leu) = N-terminal L-leucyl-L-glutamyl-[protein] + tRNA(Leu) + H(+). The catalysed reaction is N-terminal L-aspartyl-[protein] + L-leucyl-tRNA(Leu) = N-terminal L-leucyl-L-aspartyl-[protein] + tRNA(Leu) + H(+). Functionally, functions in the N-end rule pathway of protein degradation where it conjugates Leu from its aminoacyl-tRNA to the N-termini of proteins containing an N-terminal aspartate or glutamate. This chain is Aspartate/glutamate leucyltransferase, found in Pseudomonas putida (strain W619).